The chain runs to 194 residues: Putative 3-methyladenine DNA glycosylase (194 aa).

The protein belongs to the DNA glycosylase MPG family.

This chain is Putative 3-methyladenine DNA glycosylase, found in Anaeromyxobacter sp. (strain Fw109-5).